The primary structure comprises 473 residues: Adenosylhomocysteinase (473 aa).

Residues T64, D139, and E199 each contribute to the substrate site. Residue 200–202 coordinates NAD(+); sequence TTT. 2 residues coordinate substrate: K229 and D233. Residues N234, 263 to 268, E286, N321, 342 to 344, and N387 contribute to the NAD(+) site; these read GYGDVG and IGH.

It belongs to the adenosylhomocysteinase family. Requires NAD(+) as cofactor.

The protein resides in the cytoplasm. The enzyme catalyses S-adenosyl-L-homocysteine + H2O = L-homocysteine + adenosine. Its pathway is amino-acid biosynthesis; L-homocysteine biosynthesis; L-homocysteine from S-adenosyl-L-homocysteine: step 1/1. Functionally, may play a key role in the regulation of the intracellular concentration of adenosylhomocysteine. This chain is Adenosylhomocysteinase, found in Burkholderia mallei (strain SAVP1).